We begin with the raw amino-acid sequence, 267 residues long: Cilia- and flagella-associated protein 300 (267 aa).

Belongs to the CFAP300 family. As to quaternary structure, interacts with DNAAF2. Expressed in the left-right organiser (LRO) node at 8.25 dpc.

The protein localises to the cytoplasm. It is found in the cytoskeleton. Its subcellular location is the cilium axoneme. In terms of biological role, cilium- and flagellum-specific protein that plays a role in axonemal structure organization and motility. May play a role in outer and inner dynein arm assembly. In Mus musculus (Mouse), this protein is Cilia- and flagella-associated protein 300.